The sequence spans 347 residues: sn-1 oleoyl-lipid 12-desaturase (347 aa).

The next 2 helical transmembrane spans lie at 41 to 63 (AWSRVLLSVAAVVGCYALLAIAP) and 67 to 85 (LLPVWFLTGTTLTGFFVIG). A Histidine box-1 motif is present at residues 86–90 (HDCGH). Residues 98–118 (WVNNLVGHLAFLPLIYPFHSW) form a helical membrane-spanning segment. The short motif at 122-126 (HNHHH) is the Histidine box-2 element. A run of 3 helical transmembrane segments spans residues 164–184 (LWWLASVIHQLKLHFNWFAFE), 196–216 (LFVIIAGAIAFPVMFYTLGVW), and 218–238 (VVKFWLMPWLGYHFWMSTFTL). A Histidine box-3 motif is present at residues 286–290 (HHLST).

This sequence belongs to the fatty acid desaturase type 2 family. Requires Fe(2+) as cofactor.

The protein localises to the membrane. It catalyses the reaction a 1-[(9Z)-octadecenoyl]-2-acyl-glycerolipid + 2 reduced [2Fe-2S]-[ferredoxin] + O2 + 2 H(+) = a 1-[(9Z,12Z)-octadecdienoyl]-2-acyl-glycerolipid + 2 oxidized [2Fe-2S]-[ferredoxin] + 2 H2O. It functions in the pathway lipid metabolism; polyunsaturated fatty acid biosynthesis. Functionally, desaturase involved in fatty acid biosynthesis. Introduces a double bond at carbon 12 of oleoyl groups (18:1) attached to the sn-1 position of the glycerol moiety of membrane glycerolipids. Can also efficiently catalyze the desaturation of palmitoleic acid (16:1) in vitro. The polypeptide is sn-1 oleoyl-lipid 12-desaturase (Picosynechococcus sp. (strain ATCC 27264 / PCC 7002 / PR-6) (Agmenellum quadruplicatum)).